Consider the following 123-residue polypeptide: MPTIKQLIRNTRQQIRNVTKSPALRGCPQRRGTCTRVYTITPKKPNSALRKVARVRLTSGFEITAYIPGIGHNLQEHSVVLVRGGRVKDLPGVRYHIVRGTLDAVGVKDRQQGRSKYGVKKPK.

The protein belongs to the universal ribosomal protein uS12 family. As to quaternary structure, part of the 30S ribosomal subunit.

It is found in the plastid. It localises to the chloroplast. With S4 and S5 plays an important role in translational accuracy. Located at the interface of the 30S and 50S subunits. In Arabis hirsuta (Hairy rock-cress), this protein is Small ribosomal subunit protein uS12cz/uS12cy (rps12-A).